The following is a 263-amino-acid chain: Putative hydro-lyase GK2103 (263 aa).

Belongs to the D-glutamate cyclase family.

This Geobacillus kaustophilus (strain HTA426) protein is Putative hydro-lyase GK2103.